A 503-amino-acid polypeptide reads, in one-letter code: MSAVMTTIRVFDTTLRDGEQMPGVSLPLEYKIRIAKQLDKLGVDVIEAGFPSATKGEFESVKEISSLSLNAEICGLARIVKEDIDAAINANVDMVHIFVPTSRIQIEHTVKMSKEEIIEKSVECVEYIKSHGVKCMFSAMDATRTEVEYLKQIFKAVENAKVDIVNVPDTVGVATPFKFYELIKQLREHLKVPIDVHCHNDFGLAVANTYAAVMAGANEVQVTVNGIGERAGNADLAQVVMILHAIEGIKTNIKTEHLFETSKLVERLTGVKMPPNHPIVGENAFSHESGIHAHGVLKEYSTFEPGVVTPEMVGHKRRIVIGKHAGRYQIKKILEEAGYHLDDEKLNQIFEKVKEMGDKGKRVTDLDLFAIAEVVIGELKREEKAILVDEVTVLTGNKITPTAVLNAEVFGHRKVTSAIGVGPVDASLKAVTSLVGESIRITEFRMDAITGGSDALAEVYVTVEDDEGHSFTSRGAAQDIVMASIDAVINAVNYLLRMKRRKS.

The Pyruvate carboxyltransferase domain occupies 8–259; it reads IRVFDTTLRD…KTNIKTEHLF (252 aa). A divalent metal cation is bound by residues Asp17, His197, His199, and Asn233.

It belongs to the alpha-IPM synthase/homocitrate synthase family. Homodimer. A divalent metal cation is required as a cofactor.

The enzyme catalyses 3-methyl-2-oxobutanoate + acetyl-CoA + H2O = (2S)-2-isopropylmalate + CoA + H(+). It participates in amino-acid biosynthesis; L-leucine biosynthesis; L-leucine from 3-methyl-2-oxobutanoate: step 1/4. Its function is as follows. Catalyzes the condensation of the acetyl group of acetyl-CoA with 3-methyl-2-oxobutanoate (2-oxoisovalerate) to form 3-carboxy-3-hydroxy-4-methylpentanoate (2-isopropylmalate). This is Probable 2-isopropylmalate synthase (leuA) from Archaeoglobus fulgidus (strain ATCC 49558 / DSM 4304 / JCM 9628 / NBRC 100126 / VC-16).